Reading from the N-terminus, the 323-residue chain is Voltage-dependent calcium channel gamma-2 subunit (323 aa).

Residues 10 to 30 (MLLTTVGAFAAFSLMTIAVGT) form a helical membrane-spanning segment. Asparagine 48 carries an N-linked (GlcNAc...) asparagine glycan. 3 consecutive transmembrane segments (helical) span residues 104-124 (SSIFPILSVILLFMGGLCIAA), 134-154 (IILSAGIFFVSAGLSNIIGII), and 182-202 (FGALSFIIAEMVGVLAVHMFI). Positions 233–261 (YQRRSRSSSRSTEPSHSRDASPVGIKGFN) are disordered. The residue at position 253 (serine 253) is a Phosphoserine. Residue tyrosine 271 is modified to Phosphotyrosine. Residue threonine 321 is modified to Phosphothreonine.

Belongs to the PMP-22/EMP/MP20 family. CACNG subfamily. The L-type calcium channel is composed of five subunits: alpha-1, alpha-2/delta, beta and gamma. Interacts with the PDZ domains of DLG4/PSD-95 and DLG1/SAP97. May interact with GOPC. Acts as an auxiliary subunit for AMPA-selective glutamate receptors (AMPARs). Found in a complex with GRIA1, GRIA2, GRIA3, GRIA4, CNIH2, CNIH3, CACNG3, CACNG4, CACNG5, CACNG7 and CACNG8. Interacts with GRIA1 and GRIA2. Interacts with MPP2. Phosphorylation of Thr-321 impairs interaction with DLG1 and DLG4. As to expression, brain.

The protein localises to the membrane. The protein resides in the synapse. Its subcellular location is the synaptosome. Its function is as follows. Regulates the trafficking and gating properties of AMPA-selective glutamate receptors (AMPARs). Promotes their targeting to the cell membrane and synapses and modulates their gating properties by slowing their rates of activation, deactivation and desensitization. Does not show subunit-specific AMPA receptor regulation and regulates all AMPAR subunits. Thought to stabilize the calcium channel in an inactivated (closed) state. The protein is Voltage-dependent calcium channel gamma-2 subunit (CACNG2) of Homo sapiens (Human).